We begin with the raw amino-acid sequence, 357 residues long: Actin, macronuclear (357 aa).

Belongs to the actin family. Met-1 may be removed after translation.

The protein localises to the cytoplasm. It is found in the cytoskeleton. The catalysed reaction is ATP + H2O = ADP + phosphate + H(+). Functionally, actins are highly conserved proteins that are involved in various types of cell motility and are ubiquitously expressed in all eukaryotic cells. The polypeptide is Actin, macronuclear (Oxytricha fallax).